Here is a 460-residue protein sequence, read N- to C-terminus: A-type ATP synthase subunit B (460 aa).

This sequence belongs to the ATPase alpha/beta chains family. As to quaternary structure, has multiple subunits with at least A(3), B(3), C, D, E, F, H, I and proteolipid K(x).

Its subcellular location is the cell membrane. Its function is as follows. Component of the A-type ATP synthase that produces ATP from ADP in the presence of a proton gradient across the membrane. The B chain is a regulatory subunit. This Thermofilum pendens (strain DSM 2475 / Hrk 5) protein is A-type ATP synthase subunit B.